The following is a 561-amino-acid chain: Putative pectinesterase/pectinesterase inhibitor 24 (561 aa).

Residues 26–46 (IAIIAVSLVILAGIVIGAVFG) form a helical membrane-spanning segment. Positions 64–211 (DSISVSVKAV…TELTSNALAI (148 aa)) are pectinesterase inhibitor 24. N-linked (GlcNAc...) asparagine glycosylation is found at Asn92, Asn130, Asn148, and Asn200. A pectinesterase 24 region spans residues 255-548 (DIVVAKDGSG…TVKPFIDGGR (294 aa)). Thr330 and Gln360 together coordinate substrate. Residue Asp383 is the Proton donor; for pectinesterase activity of the active site. Cysteines 397 and 417 form a disulfide. The Nucleophile; for pectinesterase activity role is filled by Asp404. Residues Arg468 and Trp470 each contribute to the substrate site. Asn472 carries an N-linked (GlcNAc...) asparagine glycan.

The protein in the N-terminal section; belongs to the PMEI family. This sequence in the C-terminal section; belongs to the pectinesterase family.

It localises to the membrane. It catalyses the reaction [(1-&gt;4)-alpha-D-galacturonosyl methyl ester](n) + n H2O = [(1-&gt;4)-alpha-D-galacturonosyl](n) + n methanol + n H(+). The protein operates within glycan metabolism; pectin degradation; 2-dehydro-3-deoxy-D-gluconate from pectin: step 1/5. Its function is as follows. Acts in the modification of cell walls via demethylesterification of cell wall pectin. This Arabidopsis thaliana (Mouse-ear cress) protein is Putative pectinesterase/pectinesterase inhibitor 24 (PME24).